Consider the following 102-residue polypeptide: Citrate lyase acyl carrier protein (102 aa).

Serine 14 is subject to O-(phosphoribosyl dephospho-coenzyme A)serine.

Belongs to the CitD family. As to quaternary structure, oligomer with a subunit composition of (alpha,beta,gamma)6.

It localises to the cytoplasm. In terms of biological role, covalent carrier of the coenzyme of citrate lyase. This is Citrate lyase acyl carrier protein from Streptococcus pyogenes serotype M18 (strain MGAS8232).